Reading from the N-terminus, the 193-residue chain is NAD(P)H-quinone oxidoreductase subunit J (193 aa).

The tract at residues 1–21 (MSDSAPTNPTPTNPAPEESAS) is disordered.

It belongs to the complex I 30 kDa subunit family. NDH-1 can be composed of about 15 different subunits; different subcomplexes with different compositions have been identified which probably have different functions.

Its subcellular location is the cellular thylakoid membrane. It carries out the reaction a plastoquinone + NADH + (n+1) H(+)(in) = a plastoquinol + NAD(+) + n H(+)(out). The catalysed reaction is a plastoquinone + NADPH + (n+1) H(+)(in) = a plastoquinol + NADP(+) + n H(+)(out). NDH-1 shuttles electrons from an unknown electron donor, via FMN and iron-sulfur (Fe-S) centers, to quinones in the respiratory and/or the photosynthetic chain. The immediate electron acceptor for the enzyme in this species is believed to be plastoquinone. Couples the redox reaction to proton translocation, and thus conserves the redox energy in a proton gradient. Cyanobacterial NDH-1 also plays a role in inorganic carbon-concentration. The protein is NAD(P)H-quinone oxidoreductase subunit J of Synechococcus sp. (strain CC9902).